A 352-amino-acid polypeptide reads, in one-letter code: N-acetyl-gamma-glutamyl-phosphate reductase (352 aa).

The active site involves Cys155.

This sequence belongs to the NAGSA dehydrogenase family. Type 1 subfamily.

It localises to the cytoplasm. It catalyses the reaction N-acetyl-L-glutamate 5-semialdehyde + phosphate + NADP(+) = N-acetyl-L-glutamyl 5-phosphate + NADPH + H(+). Its pathway is amino-acid biosynthesis; L-arginine biosynthesis; N(2)-acetyl-L-ornithine from L-glutamate: step 3/4. Functionally, catalyzes the NADPH-dependent reduction of N-acetyl-5-glutamyl phosphate to yield N-acetyl-L-glutamate 5-semialdehyde. In Cyanothece sp. (strain PCC 7425 / ATCC 29141), this protein is N-acetyl-gamma-glutamyl-phosphate reductase.